Here is a 195-residue protein sequence, read N- to C-terminus: Interferon tau-9 (195 aa).

The signal sequence occupies residues 1-23 (MAFVLSLLMALVLVSYGPGGSLG). Disulfide bonds link Cys-24/Cys-122 and Cys-52/Cys-162.

The protein belongs to the alpha/beta interferon family. IFN-alphaII subfamily. In terms of tissue distribution, constitutively and exclusively expressed in the mononuclear cells of the extraembryonic trophectoderm.

It is found in the secreted. Functionally, paracrine hormone primarily responsible for maternal recognition of pregnancy. Interacts with endometrial receptors, probably type I interferon receptors, and blocks estrogen receptor expression, preventing the estrogen-induced increase in oxytocin receptor expression in the endometrium. This results in the suppression of the pulsatile endometrial release of the luteolytic hormone prostaglandin F2-alpha, hindering the regression of the corpus luteum (luteolysis) and therefore a return to ovarian cyclicity. This, and a possible direct effect of IFN-tau on prostaglandin synthesis, leads in turn to continued ovarian progesterone secretion, which stimulates the secretion by the endometrium of the nutrients required for the growth of the conceptus. In summary, displays particularly high antiviral and antiproliferative potency concurrently with particular weak cytotoxicity, high antiluteolytic activity and immunomodulatory properties. In contrast with other IFNs, IFN-tau is not virally inducible. This chain is Interferon tau-9 (IFNT9), found in Ovis aries (Sheep).